Consider the following 247-residue polypeptide: Carboxy-S-adenosyl-L-methionine synthase (247 aa).

S-adenosyl-L-methionine-binding positions include tyrosine 39, 64-66 (GCS), 117-118 (DI), asparagine 132, and arginine 199.

This sequence belongs to the class I-like SAM-binding methyltransferase superfamily. Cx-SAM synthase family. As to quaternary structure, homodimer.

It carries out the reaction prephenate + S-adenosyl-L-methionine = carboxy-S-adenosyl-L-methionine + 3-phenylpyruvate + H2O. Its function is as follows. Catalyzes the conversion of S-adenosyl-L-methionine (SAM) to carboxy-S-adenosyl-L-methionine (Cx-SAM). The protein is Carboxy-S-adenosyl-L-methionine synthase of Aeromonas salmonicida (strain A449).